The following is a 258-amino-acid chain: UPF0246 protein CKO_03380 (258 aa).

It belongs to the UPF0246 family.

This is UPF0246 protein CKO_03380 from Citrobacter koseri (strain ATCC BAA-895 / CDC 4225-83 / SGSC4696).